Consider the following 78-residue polypeptide: DNA-directed RNA polymerase subunit Rpo5 (78 aa).

The protein belongs to the archaeal Rpo5/eukaryotic RPB5 RNA polymerase subunit family. In terms of assembly, part of the RNA polymerase complex.

It localises to the cytoplasm. It catalyses the reaction RNA(n) + a ribonucleoside 5'-triphosphate = RNA(n+1) + diphosphate. In terms of biological role, DNA-dependent RNA polymerase (RNAP) catalyzes the transcription of DNA into RNA using the four ribonucleoside triphosphates as substrates. The polypeptide is DNA-directed RNA polymerase subunit Rpo5 (Methanothrix thermoacetophila (strain DSM 6194 / JCM 14653 / NBRC 101360 / PT) (Methanosaeta thermophila)).